The chain runs to 286 residues: Bifunctional protein FolD (286 aa).

NADP(+) contacts are provided by residues 166 to 168 (GAS) and I232.

This sequence belongs to the tetrahydrofolate dehydrogenase/cyclohydrolase family. In terms of assembly, homodimer.

The catalysed reaction is (6R)-5,10-methylene-5,6,7,8-tetrahydrofolate + NADP(+) = (6R)-5,10-methenyltetrahydrofolate + NADPH. The enzyme catalyses (6R)-5,10-methenyltetrahydrofolate + H2O = (6R)-10-formyltetrahydrofolate + H(+). It functions in the pathway one-carbon metabolism; tetrahydrofolate interconversion. Functionally, catalyzes the oxidation of 5,10-methylenetetrahydrofolate to 5,10-methenyltetrahydrofolate and then the hydrolysis of 5,10-methenyltetrahydrofolate to 10-formyltetrahydrofolate. This Shewanella denitrificans (strain OS217 / ATCC BAA-1090 / DSM 15013) protein is Bifunctional protein FolD.